A 149-amino-acid polypeptide reads, in one-letter code: MADWDKVNSVWSAMEANITAVGQNILLRLFEQYPESQSYFPKLKNKSLGELKDTADIKAQADTVLKALGNIVKKKGNHSQPVKALAATHITTHKIPPHYFTKITTIAVGVLSEMYPSEMNAQAQEAFSGAFKSICSDIEKEYKAANFQG.

The residue at position 2 (alanine 2) is an N-acetylalanine. The region spanning alanine 2–lysine 143 is the Globin domain. Histidine 89 is a binding site for heme b.

This sequence belongs to the globin family. As to quaternary structure, monomeric.

The protein resides in the cytoplasm. It is found in the sarcoplasm. It catalyses the reaction Fe(III)-heme b-[protein] + nitric oxide + H2O = Fe(II)-heme b-[protein] + nitrite + 2 H(+). It carries out the reaction H2O2 + AH2 = A + 2 H2O. Its function is as follows. Monomeric heme protein which primary function is to store oxygen and facilitate its diffusion within muscle tissues. Reversibly binds oxygen through a pentacoordinated heme iron and enables its timely and efficient release as needed during periods of heightened demand. Depending on the oxidative conditions of tissues and cells, and in addition to its ability to bind oxygen, it also has a nitrite reductase activity whereby it regulates the production of bioactive nitric oxide. Under stress conditions, like hypoxia and anoxia, it also protects cells against reactive oxygen species thanks to its pseudoperoxidase activity. This Galeorhinus galeus (Tope shark) protein is Myoglobin (mb).